Reading from the N-terminus, the 308-residue chain is Uricase-2 isozyme 1 (308 aa).

Catalysis depends on charge relay system residues K17 and T63. Positions 63, 64, 165, 182, 237, 238, and 264 each coordinate urate. The Charge relay system role is filled by H266. Residues 306–308 (SKL) carry the Microbody targeting signal motif.

This sequence belongs to the uricase family.

It localises to the peroxisome. It carries out the reaction urate + O2 + H2O = 5-hydroxyisourate + H2O2. It participates in purine metabolism; urate degradation; (S)-allantoin from urate: step 1/3. In terms of biological role, catalyzes the oxidation of uric acid to 5-hydroxyisourate, which is further processed to form (S)-allantoin. In Canavalia lineata (Beach bean), this protein is Uricase-2 isozyme 1.